The following is a 315-amino-acid chain: Acetaldehyde dehydrogenase 2 (315 aa).

Ser-13–Ile-16 serves as a coordination point for NAD(+). Residue Cys-131 is the Acyl-thioester intermediate of the active site. NAD(+)-binding positions include Ser-162 to Asn-170 and Asn-290.

The protein belongs to the acetaldehyde dehydrogenase family.

The catalysed reaction is acetaldehyde + NAD(+) + CoA = acetyl-CoA + NADH + H(+). This Pseudomonas putida (strain W619) protein is Acetaldehyde dehydrogenase 2.